The chain runs to 355 residues: Aromatic amino acid aminotransferase (355 aa).

An N6-(pyridoxal phosphate)lysine modification is found at Lys217.

The protein belongs to the class-II pyridoxal-phosphate-dependent aminotransferase family. As to quaternary structure, homodimer. Pyridoxal 5'-phosphate is required as a cofactor.

The enzyme catalyses an aromatic L-alpha-amino acid + 2-oxoglutarate = an aromatic oxo-acid + L-glutamate. In terms of biological role, aminotransferase that catalyzes the conversion of aromatic amino acids and 2-oxoglutarate into corresponding aromatic oxo acids and L-glutamate. This Mycobacterium avium (strain 104) protein is Aromatic amino acid aminotransferase.